The chain runs to 78 residues: Antitoxin VapB1 (78 aa).

A SpoVT-AbrB domain is found at 3–44; the sequence is TKVFQSGNSQAVRIPMDFRFDVDTVEIFRKENGDVVLRPVSK.

Belongs to the VapB family. Forms multimers, as well forming as a complex with VapC1.

Antitoxin component of a type II toxin-antitoxin (TA) system. Upon expression in E.coli neutralizes the effect of toxin VapC1. In vitro inhibits the RNase activity of VapC1. The sequence is that of Antitoxin VapB1 (vapB1) from Haemophilus influenzae (strain R2866).